Here is a 565-residue protein sequence, read N- to C-terminus: Ubiquitin carboxyl-terminal hydrolase 39 (565 aa).

2 stretches are compositionally biased toward basic and acidic residues: residues 1–21 and 28–39; these read MSGR…ESES and VKRERDREREPE. Disordered stretches follow at residues 1–61 and 75–95; these read MSGR…SARE and EREV…NGRV. Serine 46 carries the post-translational modification Phosphoserine. A Glycyl lysine isopeptide (Lys-Gly) (interchain with G-Cter in SUMO2) cross-link involves residue lysine 51. Serine 82 is modified (phosphoserine). Residues 85-95 show a composition bias toward basic and acidic residues; it reads EREVRAKNGRV. A UBP-type; degenerate zinc finger spans residues 103–200; that stretch reads RHCPYLDTIN…YVLKPTFTKQ (98 aa). Zn(2+)-binding residues include cysteine 136, cysteine 139, histidine 155, and histidine 161. The region spanning 225 to 555 is the USP domain; it reads VGLNNIKAND…EAYIQIWKRR (331 aa).

It belongs to the peptidase C19 family. The U4/U6-U5 tri-snRNP complex is a building block of the precatalytic spliceosome (spliceosome B complex). Component of the U4/U6-U5 tri-snRNP complex composed of the U4, U6 and U5 snRNAs and at least PRPF3, PRPF4, PRPF6, PRPF8, PRPF31, SNRNP200, TXNL4A, SNRNP40, SNRPB, SNRPD1, SNRPD2, SNRPD3, SNRPE, SNRPF, SNRPG, DDX23, CD2BP2, PPIH, SNU13, EFTUD2, SART1 and USP39, plus LSM2, LSM3, LSM4, LSM5, LSM6, LSM7 and LSM8.

It localises to the nucleus. It carries out the reaction Thiol-dependent hydrolysis of ester, thioester, amide, peptide and isopeptide bonds formed by the C-terminal Gly of ubiquitin (a 76-residue protein attached to proteins as an intracellular targeting signal).. Deubiquitinating enzyme that plays a role in many cellular processes including cellular antiviral response, epithelial morphogenesis, DNA repair or B-cell development. Plays a role in pre-mRNA splicing as a component of the U4/U6-U5 tri-snRNP, one of the building blocks of the precatalytic spliceosome. Specifically regulates immunoglobulin gene rearrangement in a spliceosome-dependent manner, which involves modulating chromatin interactions at the Igh locus and therefore plays an essential role in B-cell development. Regulates AURKB mRNA levels, and thereby plays a role in cytokinesis and in the spindle checkpoint. Regulates apoptosis and G2/M cell cycle checkpoint in response to DNA damage by deubiquitinating and stabilizing CHK2. Also plays an important role in DNA repair by controlling the recruitment of XRCC4/LIG4 to DNA double-strand breaks for non-homologous end-joining repair. Participates in antiviral activity by affecting the type I IFN signaling by stabilizing STAT1 and decreasing its 'Lys-6'-linked ubiquitination. Contributes to non-canonical Wnt signaling during epidermal differentiation. Acts as a negative regulator NF-kappa-B activation through deubiquitination of 'Lys-48'-linked ubiquitination of NFKBIA. The chain is Ubiquitin carboxyl-terminal hydrolase 39 from Homo sapiens (Human).